Consider the following 116-residue polypeptide: uncharacterized protein (116 aa).

Positions Met1–Ala21 are cleaved as a signal peptide.

This is an uncharacterized protein from Saccharomyces cerevisiae (strain ATCC 204508 / S288c) (Baker's yeast).